We begin with the raw amino-acid sequence, 34 residues long: Voltage sensor toxin 3 (34 aa).

3 disulfides stabilise this stretch: C2-C17, C9-C22, and C16-C29.

It belongs to the neurotoxin 10 (Hwtx-1) family. 61 (VSTX3) subfamily. Expressed by the venom gland.

The protein resides in the secreted. Potent voltage-gated sodium channel blocker (IC(50)=190 nM and 210 nM on human and rat Nav1.3/SCN3A respectively, 430 nM on human Nav1.7/SCN9A, 770 nM and 290 nM on human and rat Nav1.8/SCN10A, respectively). Binds the voltage-sensor domain of the potassium channel KvAP (from Aeropyrum pernix) and weakly inhibits this channel. The sequence is that of Voltage sensor toxin 3 from Grammostola rosea (Chilean rose tarantula).